A 191-amino-acid chain; its full sequence is Putative glutathione-dependent formaldehyde-activating enzyme (191 aa).

The region spanning 20–166 is the CENP-V/GFA domain; it reads FPGGNLYCLC…FQSLGLQTYD (147 aa). Residues Cys27, Cys29, Cys48, Cys50, Cys53, Cys95, and Cys98 each contribute to the Zn(2+) site.

The protein belongs to the Gfa family. Zn(2+) serves as cofactor.

It carries out the reaction S-(hydroxymethyl)glutathione = glutathione + formaldehyde. Its pathway is one-carbon metabolism; formaldehyde degradation; formate from formaldehyde (glutathione route): step 1/3. Functionally, catalyzes the condensation of formaldehyde and glutathione to S-hydroxymethylglutathione. This chain is Putative glutathione-dependent formaldehyde-activating enzyme, found in Aspergillus flavus (strain ATCC 200026 / FGSC A1120 / IAM 13836 / NRRL 3357 / JCM 12722 / SRRC 167).